The chain runs to 458 residues: A-type ATP synthase subunit B (458 aa).

This sequence belongs to the ATPase alpha/beta chains family. In terms of assembly, has multiple subunits with at least A(3), B(3), C, D, E, F, H, I and proteolipid K(x).

It localises to the cell membrane. Component of the A-type ATP synthase that produces ATP from ADP in the presence of a proton gradient across the membrane. The B chain is a regulatory subunit. This Methanocorpusculum labreanum (strain ATCC 43576 / DSM 4855 / Z) protein is A-type ATP synthase subunit B.